A 155-amino-acid polypeptide reads, in one-letter code: Anaerobic ribonucleoside-triphosphate reductase-activating protein (155 aa).

[4Fe-4S] cluster contacts are provided by C26, C30, and C33. S-adenosyl-L-methionine is bound by residues 32-34 and G74; that span reads GCY.

The protein belongs to the organic radical-activating enzymes family. As to quaternary structure, forms a tetramer composed of two NrdD and two NrdG subunits. The cofactor is [4Fe-4S] cluster.

Its subcellular location is the cytoplasm. It carries out the reaction glycyl-[protein] + reduced [flavodoxin] + S-adenosyl-L-methionine = glycin-2-yl radical-[protein] + semiquinone [flavodoxin] + 5'-deoxyadenosine + L-methionine + H(+). Functionally, activation of anaerobic ribonucleoside-triphosphate reductase under anaerobic conditions by generation of an organic free radical, using S-adenosylmethionine and reduced flavodoxin as cosubstrates to produce 5'-deoxy-adenosine. In Haemophilus influenzae (strain ATCC 51907 / DSM 11121 / KW20 / Rd), this protein is Anaerobic ribonucleoside-triphosphate reductase-activating protein (nrdG).